A 242-amino-acid polypeptide reads, in one-letter code: Glucosamine-6-phosphate deaminase (242 aa).

Asp-67 serves as the catalytic Proton acceptor; for enolization step. The active-site For ring-opening step is Asn-137. The active-site Proton acceptor; for ring-opening step is the His-139. The active-site For ring-opening step is the Glu-144.

It belongs to the glucosamine/galactosamine-6-phosphate isomerase family. NagB subfamily.

It catalyses the reaction alpha-D-glucosamine 6-phosphate + H2O = beta-D-fructose 6-phosphate + NH4(+). Its pathway is amino-sugar metabolism; N-acetylneuraminate degradation; D-fructose 6-phosphate from N-acetylneuraminate: step 5/5. Its function is as follows. Catalyzes the reversible isomerization-deamination of glucosamine 6-phosphate (GlcN6P) to form fructose 6-phosphate (Fru6P) and ammonium ion. The polypeptide is Glucosamine-6-phosphate deaminase (Staphylococcus saprophyticus subsp. saprophyticus (strain ATCC 15305 / DSM 20229 / NCIMB 8711 / NCTC 7292 / S-41)).